We begin with the raw amino-acid sequence, 325 residues long: Beta-ketoacyl-[acyl-carrier-protein] synthase III (325 aa).

Residues Cys-119 and His-252 contribute to the active site. The segment at 253–257 (QANIR) is ACP-binding. Asn-282 is an active-site residue.

It belongs to the thiolase-like superfamily. FabH family. As to quaternary structure, homodimer.

It is found in the cytoplasm. The catalysed reaction is malonyl-[ACP] + acetyl-CoA + H(+) = 3-oxobutanoyl-[ACP] + CO2 + CoA. It participates in lipid metabolism; fatty acid biosynthesis. Functionally, catalyzes the condensation reaction of fatty acid synthesis by the addition to an acyl acceptor of two carbons from malonyl-ACP. Catalyzes the first condensation reaction which initiates fatty acid synthesis and may therefore play a role in governing the total rate of fatty acid production. Possesses both acetoacetyl-ACP synthase and acetyl transacylase activities. Its substrate specificity determines the biosynthesis of branched-chain and/or straight-chain of fatty acids. The sequence is that of Beta-ketoacyl-[acyl-carrier-protein] synthase III from Variovorax paradoxus (strain S110).